A 1254-amino-acid polypeptide reads, in one-letter code: Structural polyprotein (1254 aa).

The interval 1 to 33 is necessary for nucleocapsid assembly and virus assembly; the sequence is MFPFQPMYPMQPMPYRNPFAAPRRPWFPRTDPF. Residues 33–68 form a host transcription inhibition region; that stretch reads FLAMQVQELTRSMANLTFKQRRGAPPEGPPAKKSKR. A Supraphysiological nuclear export signal motif is present at residues 41–48; it reads LTRSMANL. N-linked (GlcNAc...) asparagine; by host glycosylation is present at N47. The tract at residues 48–118 is disordered; sequence LTFKQRRGAP…KKPGKRQRMV (71 aa). Positions 64–68 match the Nuclear localization signal motif; that stretch reads KKSKR. A compositionally biased stretch (basic residues) spans 76–91; the sequence is GGQRKKKKNEGKKKAK. Residues 90–126 form a binding to the viral RNA region; the sequence is AKTGPPNLKTQNGNKKKTNKKPGKRQRMVMKLESDKT. A phosphothreonine mark is found at T92 and T107. Residues 103-117 are compositionally biased toward basic residues; it reads NKKKTNKKPGKRQRM. Residues 111-125 form a ribosome-binding region; the sequence is PGKRQRMVMKLESDK. S123 is subject to Phosphoserine. The Peptidase S3 domain occupies 125-274; it reads KTFPIMLEGK…KYTPENCEQW (150 aa). Phosphothreonine is present on T126. H151 functions as the Charge relay system in the catalytic mechanism. The interval 167–172 is interaction with spike glycoprotein E2; the sequence is KKASKY. Catalysis depends on charge relay system residues D173 and S225. The segment at 259 to 263 is interaction with spike glycoprotein E2; sequence EKGVT. The functions as an uncleaved signal peptide for the precursor of protein E3/E2 stretch occupies residues 275-286; that stretch reads SLVTTMCLLANV. Over 275 to 702 the chain is Extracellular; sequence SLVTTMCLLA…YHRYPMSTIT (428 aa). 7 disulfides stabilise this stretch: C281–C290, C352–C456, C355–C360, C423–C437, C484–C599, C533–C559, and C535–C553. N285 is a glycosylation site (N-linked (GlcNAc...) asparagine; by host). N-linked (GlcNAc...) asparagine; by host glycans are attached at residues N545 and N651. Residues 703–723 traverse the membrane as a helical segment; sequence GLSICAAIVAVSIAASTWLLC. The tract at residues 724 to 728 is interaction with the capsid protein; sequence RSRAS. The Cytoplasmic portion of the chain corresponds to 724-756; the sequence is RSRASCLTPYRLTPNAKMPLCLAVLCCARSARA. S-palmitoyl cysteine; by host attachment occurs at residues C729, C749, and C750. A disulfide bond links C729 and C750. A transient transmembrane before p62-6K protein processing region spans residues 735 to 754; the sequence is LTPNAKMPLCLAVLCCARSA. Topologically, residues 757 to 768 are extracellular; sequence ETTWESLDHLWN. The chain crosses the membrane as a helical span at residues 769–789; the sequence is NNQQMFWTQLLIPLAALIVVT. A topological domain (cytoplasmic) is located at residue R790. Residues 791–811 form a helical membrane-spanning segment; sequence LLKCMCCVVPFLVVAGAAGAG. Topologically, residues 812–1224 are extracellular; it reads AYEHATTMPN…SKTAWTWLTS (413 aa). Intrachain disulfides connect C861–C926, C874–C906, C875–C908, and C880–C890. Residues 896 to 913 form an E1 fusion peptide loop region; the sequence is VYPFMWGGAYCFCDTENT. N946 and N1082 each carry an N-linked (GlcNAc...) asparagine; by host glycan. Cystine bridges form between C1071–C1083, C1113–C1188, C1118–C1192, and C1140–C1182. A helical membrane pass occupies residues 1225–1245; that stretch reads LLGGSAVIIIIGLVLATLVAM. Over 1246–1254 the chain is Cytoplasmic; it reads YVLTNQKHN.

Homodimer. Homomultimer. Interacts with host karyopherin KPNA4; this interaction allows the nuclear import of the viral capsid protein. Interacts with spike glycoprotein E2. Interacts with host IRAK1; the interaction leads to inhibition of IRAK1-dependent signaling. Part of a tetrameric complex composed of host CRM1, host importin alpha/beta dimer and the viral capsid; this complex blocks the receptor-mediated transport through the nuclear pore. Interacts with host phosphatase PPP1CA; this interaction dephosphorylates the capsid protein, which increases its ability to bind to the viral genome. In terms of assembly, the precursor of protein E3/E2 and E1 form a heterodimer shortly after synthesis. As to quaternary structure, interacts with spike glycoprotein E2. The precursor of protein E3/E2 and E1 form a heterodimer shortly after synthesis. Processing of the precursor of protein E3/E2 into E2 and E3 results in a heterodimer of the spike glycoproteins E2 and E1. Spike at virion surface are constituted of three E2-E1 heterodimers. After target cell attachment and endocytosis, E1 change conformation to form homotrimers. Interacts with 6K protein. Interacts with host LDLRAD3; this interaction mediates viral entry to the host cell. Interacts with spike glycoprotein E1. Processing of the precursor of protein E3/E2 into E2 and E3 results in a heterodimer of the spike glycoproteins E2 and E1. Spike at virion surface are constituted of a trimer of E2-E1 heterodimers. Interacts with 6K protein. Interacts with host LDLRAD3; this interaction mediates viral entry to the host cell. In terms of assembly, oligomer. Interacts with spike glycoprotein E1. Interacts with spike glycoprotein E2. Structural polyprotein: Specific enzymatic cleavages in vivo yield mature proteins. Capsid protein is auto-cleaved during polyprotein translation, unmasking a signal peptide at the N-terminus of the precursor of E3/E2. The remaining polyprotein is then targeted to the host endoplasmic reticulum, where host signal peptidase cleaves it into pE2, 6K and E1 proteins. pE2 is further processed to mature E3 and E2 by host furin in trans-Golgi vesicle. Post-translationally, phosphorylated on serine and threonine residues. In terms of processing, palmitoylated via thioester bonds. These palmitoylations may induce disruption of the C-terminus transmembrane. This would result in the reorientation of E2 C-terminus from lumenal to cytoplasmic side. N-glycosylated. Post-translationally, palmitoylated via thioester bonds.

The protein localises to the virion. It localises to the host cytoplasm. The protein resides in the host cell membrane. Its subcellular location is the host nucleus. It is found in the virion membrane. The protein localises to the host Golgi apparatus. It localises to the host trans-Golgi network. The protein resides in the host endoplasmic reticulum. It carries out the reaction Autocatalytic release of the core protein from the N-terminus of the togavirus structural polyprotein by hydrolysis of a -Trp-|-Ser- bond.. Its function is as follows. Forms an icosahedral capsid with a T=4 symmetry composed of 240 copies of the capsid protein surrounded by a lipid membrane through which penetrate 80 spikes composed of trimers of E1-E2 heterodimers. The capsid protein binds to the viral RNA genome at a site adjacent to a ribosome binding site for viral genome translation following genome release. Possesses a protease activity that results in its autocatalytic cleavage from the nascent structural protein. Following its self-cleavage, the capsid protein transiently associates with ribosomes, and within several minutes the protein binds to viral RNA and rapidly assembles into icosahedric core particles. The resulting nucleocapsid eventually associates with the cytoplasmic domain of the spike glycoprotein E2 at the cell membrane, leading to budding and formation of mature virions. In case of infection, new virions attach to target cells and after clathrin-mediated endocytosis their membrane fuses with the host endosomal membrane. This leads to the release of the nucleocapsid into the cytoplasm, followed by an uncoating event necessary for the genomic RNA to become accessible. The uncoating might be triggered by the interaction of capsid proteins with ribosomes. Binding of ribosomes would release the genomic RNA since the same region is genomic RNA-binding and ribosome-binding. Specifically inhibits interleukin-1 receptor-associated kinase 1/IRAK1-dependent signaling during viral entry, representing a means by which the alphaviruses may evade innate immune detection and activation prior to viral gene expression. Inhibits host transcription. Forms a tetrameric complex with XPO1/CRM1 and the nuclear import receptor importin. This complex blocks the central channel of host nuclear pores thereby inhibiting the receptor-mediated nuclear transport and thus the host mRNA and rRNA transcription. The inhibition of transcription is linked to a cytopathic effect on the host cell. Provides the signal sequence for the translocation of the precursor of protein E3/E2 to the host endoplasmic reticulum. Furin-cleaved E3 remains associated with spike glycoprotein E1 and mediates pH protection of the latter during the transport via the secretory pathway. After virion release from the host cell, the assembly protein E3 is gradually released in the extracellular space. In terms of biological role, plays a role in viral attachment to target host cell, by binding to the cell receptor LDLRAD3. Synthesized as a p62 precursor which is processed by furin at the cell membrane just before virion budding, giving rise to E2-E1 heterodimer. The p62-E1 heterodimer is stable, whereas E2-E1 is unstable and dissociate at low pH. p62 is processed at the last step, presumably to avoid E1 fusion activation before its final export to cell surface. E2 C-terminus contains a transitory transmembrane that would be disrupted by palmitoylation, resulting in reorientation of the C-terminal tail from lumenal to cytoplasmic side. This step is critical since E2 C-terminus is involved in budding by interacting with capsid proteins. This release of E2 C-terminus in cytoplasm occurs lately in protein export, and precludes premature assembly of particles at the endoplasmic reticulum membrane. Functionally, acts as a viroporin that participates in virus glycoprotein processing and transport to the plasma membrane, cell permeabilization and budding of viral particles. Disrupts the calcium homeostasis of the cell, probably at the endoplasmic reticulum level. This leads to cytoplasmic calcium elevation. Because of its lipophilic properties, the 6K protein is postulated to influence the selection of lipids that interact with the transmembrane domains of the glycoproteins, which, in turn, affects the deformability of the bilayer required for the extreme curvature that occurs as budding proceeds. Present in low amount in virions, about 3% compared to viral glycoproteins. Its function is as follows. Class II viral fusion protein. Fusion activity is inactive as long as E1 is bound to E2 in mature virion. After virus attachment to cell receptor LDLRAD3 and endocytosis, acidification of the endosome induce dissociation of E1/E2 heterodimer and concomitant trimerization of the E1 subunits. This E1 trimer is fusion active, and promotes release of viral nucleocapsid in cytoplasm after endosome and viral membrane fusion. Efficient fusion requires the presence of cholesterol and sphingolipid in the target membrane. This Venezuelan equine encephalitis virus (strain Everglades Fe3-7c) (VEEV) protein is Structural polyprotein.